The following is a 61-amino-acid chain: Early E3 6.4 kDa protein (61 aa).

The disordered stretch occupies residues 1-25 (MGNAGPLKLHTITKPGTIPYPPHGS).

The polypeptide is Early E3 6.4 kDa protein (Homo sapiens (Human)).